The primary structure comprises 301 residues: Probable alpha-L-glutamate ligase 2 (301 aa).

Residues 104–287 form the ATP-grasp domain; sequence LQLLSRKSIG…VADKIIQFIE (184 aa). ATP is bound by residues lysine 141, 178-179, aspartate 187, and 211-213; these read EY and RSN. 3 residues coordinate Mg(2+): aspartate 248, glutamate 260, and asparagine 262. Aspartate 248, glutamate 260, and asparagine 262 together coordinate Mn(2+).

This sequence belongs to the RimK family. The cofactor is Mg(2+). It depends on Mn(2+) as a cofactor.

In Shewanella denitrificans (strain OS217 / ATCC BAA-1090 / DSM 15013), this protein is Probable alpha-L-glutamate ligase 2.